Consider the following 906-residue polypeptide: Cadherin-2 (906 aa).

A signal peptide spans 1–25 (MCRIAGALRTLLPLLAALLQASVEA). A propeptide spanning residues 26–159 (SGEIALCKTG…HSGHLQRQKR (134 aa)) is cleaved from the precursor. Phosphoserine; by FAM20C occurs at positions 96 and 135. Cadherin domains are found at residues 160-267 (DWVI…RPEF), 268-382 (LHQV…PPEF), 383-497 (TAMT…NPYF), 498-603 (APNP…DNAP), and 604-714 (QVLP…DVDR). Residues 160–724 (DWVIPPINLP…IVGAGLGTGA (565 aa)) are Extracellular-facing. A Ca(2+)-binding site is contributed by Glu170. A glycan (N-linked (GlcNAc...) asparagine) is linked at Asn190. Residues Asp226, Glu228, Asp259, Met260, Asn261, Asp262, and Asn263 each contribute to the Ca(2+) site. Asn273 carries an N-linked (GlcNAc...) asparagine glycan. Ca(2+) is bound by residues Asp293, Asp295, and Asn301. N-linked (GlcNAc...) asparagine glycosylation occurs at Asn325. Asp353 contributes to the Ca(2+) binding site. 4 N-linked (GlcNAc...) asparagine glycosylation sites follow: Asn402, Asn572, Asn651, and Asn692. Residues 725–745 (IIAILLCIIILLILVLMFVVW) form a helical membrane-spanning segment. At 746–906 (MKRRDKERQA…LADMYGGGDD (161 aa)) the chain is on the cytoplasmic side. The segment covering 863–880 (SGSTAGSLSSLNSSSSGG) has biased composition (low complexity). The tract at residues 863–884 (SGSTAGSLSSLNSSSSGGEQDY) is disordered.

In terms of assembly, homodimer (via extracellular region). Can also form heterodimers with other cadherins (via extracellular region). Dimerization occurs in trans, i.e. with a cadherin chain from another cell. Interacts with CDCP1. Interacts with PCDH8; this complex may also include TAOK2. The interaction with PCDH8 may lead to internalization through TAOK2/p38 MAPK pathway. Identified in a complex containing FGFR4, NCAM1, CDH2, PLCG1, FRS2, SRC, SHC1, GAP43 and CTTN. May interact with OBSCN (via protein kinase domain 2). Interacts with FBXO45. Post-translationally, cleaved by MMP24. Ectodomain cleavage leads to the generation of a soluble 90 kDa N-terminal soluble fragment and a 45 kDa membrane-bound C-terminal fragment 1 (CTF1), which is further cleaved by gamma-secretase into a 35 kDa. Cleavage in neural stem cells by MMP24 affects CDH2-mediated anchorage of neural stem cells to ependymocytes in the adult subependymal zone, leading to modulate neural stem cell quiescence. May be phosphorylated by OBSCN.

The protein localises to the cell membrane. It localises to the sarcolemma. Its subcellular location is the cell junction. It is found in the cell surface. The protein resides in the desmosome. The protein localises to the adherens junction. Its function is as follows. Calcium-dependent cell adhesion protein; preferentially mediates homotypic cell-cell adhesion by dimerization with a CDH2 chain from another cell. Cadherins may thus contribute to the sorting of heterogeneous cell types. Acts as a regulator of neural stem cells quiescence by mediating anchorage of neural stem cells to ependymocytes in the adult subependymal zone: upon cleavage by MMP24, CDH2-mediated anchorage is affected, leading to modulate neural stem cell quiescence. Plays a role in cell-to-cell junction formation between pancreatic beta cells and neural crest stem (NCS) cells, promoting the formation of processes by NCS cells. Required for proper neurite branching. Required for pre- and postsynaptic organization. CDH2 may be involved in neuronal recognition mechanism. In hippocampal neurons, may regulate dendritic spine density. The protein is Cadherin-2 (CDH2) of Homo sapiens (Human).